Consider the following 754-residue polypeptide: 5-methyltetrahydropteroyltriglutamate--homocysteine methyltransferase (754 aa).

5-methyltetrahydropteroyltri-L-glutamate-binding positions include 15-18 (RELK) and Lys114. Residues 430–432 (IGS) and Glu483 contribute to the L-homocysteine site. Residues 430 to 432 (IGS) and Glu483 each bind L-methionine. Residues 514–515 (RC) and Trp560 contribute to the 5-methyltetrahydropteroyltri-L-glutamate site. Residue Asp598 coordinates L-homocysteine. L-methionine is bound at residue Asp598. Glu604 contacts 5-methyltetrahydropteroyltri-L-glutamate. Zn(2+)-binding residues include His641, Cys643, and Glu665. Catalysis depends on His694, which acts as the Proton donor. Position 726 (Cys726) interacts with Zn(2+).

This sequence belongs to the vitamin-B12 independent methionine synthase family. Zn(2+) is required as a cofactor.

The catalysed reaction is 5-methyltetrahydropteroyltri-L-glutamate + L-homocysteine = tetrahydropteroyltri-L-glutamate + L-methionine. It functions in the pathway amino-acid biosynthesis; L-methionine biosynthesis via de novo pathway; L-methionine from L-homocysteine (MetE route): step 1/1. Its function is as follows. Catalyzes the transfer of a methyl group from 5-methyltetrahydrofolate to homocysteine resulting in methionine formation. This is 5-methyltetrahydropteroyltriglutamate--homocysteine methyltransferase from Campylobacter jejuni subsp. jejuni serotype O:23/36 (strain 81-176).